The chain runs to 200 residues: GTP cyclohydrolase 1 (200 aa).

Residues cysteine 87, histidine 90, and cysteine 158 each coordinate Zn(2+).

It belongs to the GTP cyclohydrolase I family. As to quaternary structure, toroid-shaped homodecamer, composed of two pentamers of five dimers.

It catalyses the reaction GTP + H2O = 7,8-dihydroneopterin 3'-triphosphate + formate + H(+). Its pathway is cofactor biosynthesis; 7,8-dihydroneopterin triphosphate biosynthesis; 7,8-dihydroneopterin triphosphate from GTP: step 1/1. The protein is GTP cyclohydrolase 1 of Xanthomonas axonopodis pv. citri (strain 306).